Here is a 271-residue protein sequence, read N- to C-terminus: Putative phosphoenolpyruvate synthase regulatory protein (271 aa).

151 to 158 provides a ligand contact to ADP; that stretch reads GVSRSGKT.

Belongs to the pyruvate, phosphate/water dikinase regulatory protein family. PSRP subfamily.

It carries out the reaction [pyruvate, water dikinase] + ADP = [pyruvate, water dikinase]-phosphate + AMP + H(+). It catalyses the reaction [pyruvate, water dikinase]-phosphate + phosphate + H(+) = [pyruvate, water dikinase] + diphosphate. Its function is as follows. Bifunctional serine/threonine kinase and phosphorylase involved in the regulation of the phosphoenolpyruvate synthase (PEPS) by catalyzing its phosphorylation/dephosphorylation. This chain is Putative phosphoenolpyruvate synthase regulatory protein, found in Burkholderia vietnamiensis (strain G4 / LMG 22486) (Burkholderia cepacia (strain R1808)).